A 225-amino-acid polypeptide reads, in one-letter code: Probable septum site-determining protein MinC (225 aa).

The protein belongs to the MinC family. As to quaternary structure, interacts with MinD and FtsZ.

In terms of biological role, cell division inhibitor that blocks the formation of polar Z ring septums. Rapidly oscillates between the poles of the cell to destabilize FtsZ filaments that have formed before they mature into polar Z rings. Prevents FtsZ polymerization. The chain is Probable septum site-determining protein MinC from Listeria welshimeri serovar 6b (strain ATCC 35897 / DSM 20650 / CCUG 15529 / CIP 8149 / NCTC 11857 / SLCC 5334 / V8).